The sequence spans 527 residues: Peptide chain release factor 3 (527 aa).

One can recognise a tr-type G domain in the interval 9–278 (NKRRTFAIIS…GLTQWAPKPQ (270 aa)). GTP is bound by residues 18-25 (SHPDAGKT), 86-90 (DTPGH), and 140-143 (NKLD).

It belongs to the TRAFAC class translation factor GTPase superfamily. Classic translation factor GTPase family. PrfC subfamily.

The protein resides in the cytoplasm. Its function is as follows. Increases the formation of ribosomal termination complexes and stimulates activities of RF-1 and RF-2. It binds guanine nucleotides and has strong preference for UGA stop codons. It may interact directly with the ribosome. The stimulation of RF-1 and RF-2 is significantly reduced by GTP and GDP, but not by GMP. This Haemophilus influenzae (strain PittGG) protein is Peptide chain release factor 3.